Consider the following 371-residue polypeptide: tRNA-specific 2-thiouridylase MnmA (371 aa).

ATP-binding positions include 13–20 (GMSGGVDS) and M39. Residues 99–101 (NPD) form an interaction with target base in tRNA region. Catalysis depends on C104, which acts as the Nucleophile. A disulfide bridge connects residues C104 and C200. G128 serves as a coordination point for ATP. The interval 150-152 (KDQ) is interaction with tRNA. C200 serves as the catalytic Cysteine persulfide intermediate. Residues 308–309 (RY) form an interaction with tRNA region.

The protein belongs to the MnmA/TRMU family.

It is found in the cytoplasm. It carries out the reaction S-sulfanyl-L-cysteinyl-[protein] + uridine(34) in tRNA + AH2 + ATP = 2-thiouridine(34) in tRNA + L-cysteinyl-[protein] + A + AMP + diphosphate + H(+). Its function is as follows. Catalyzes the 2-thiolation of uridine at the wobble position (U34) of tRNA, leading to the formation of s(2)U34. The polypeptide is tRNA-specific 2-thiouridylase MnmA (Listeria monocytogenes serotype 4b (strain CLIP80459)).